The sequence spans 122 residues: Large ribosomal subunit protein uL14c (122 aa).

It belongs to the universal ribosomal protein uL14 family. As to quaternary structure, part of the 50S ribosomal subunit.

The protein resides in the plastid. It is found in the chloroplast. Its function is as follows. Binds to 23S rRNA. The sequence is that of Large ribosomal subunit protein uL14c from Angiopteris evecta (Mule's foot fern).